We begin with the raw amino-acid sequence, 1106 residues long: Protein kinase C (1106 aa).

The REM-1 1 domain maps to 1 to 67 (MDGDDLIASV…MRELQLRQMK (67 aa)). The segment at 65–138 (QMKQEGASPT…PRPFAPVPKA (74 aa)) is disordered. A compositionally biased stretch (pro residues) spans 79–93 (PPNPDGSAPVPPPKD). Residues 149 to 226 (KYDTPYLGPK…LKRYEDLHVD (78 aa)) form the REM-1 2 domain. One can recognise a C2 domain in the interval 232 to 350 (APDDESLSTP…MRRKKIESEF (119 aa)). The segment covering 361–370 (MEHGAAHGRQ) has biased composition (basic and acidic residues). Residues 361–400 (MEHGAAHGRQDAGGAPGSSNRPPSGGHSGGPGQGYAGGAP) are disordered. Residues 386–400 (GHSGGPGQGYAGGAP) are compositionally biased toward gly residues. 2 Phorbol-ester/DAG-type zinc fingers span residues 460-508 (GHKF…VTKC) and 528-578 (PHRF…PDFC). Composition is skewed to polar residues over residues 600-609 (KSASVSSGLS) and 658-668 (YIPPQSPTAAQ). Disordered regions lie at residues 600-625 (KSAS…PQDN) and 658-719 (YIPP…HAHY). A compositionally biased stretch (low complexity) spans 683–693 (AAAAAAAAAAA). The 260-residue stretch at 781 to 1040 (FNFLAVLGKG…AQEVMSHAFF (260 aa)) folds into the Protein kinase domain. ATP contacts are provided by residues 787–795 (LGKGNFGKV) and K810. Catalysis depends on D906, which acts as the Proton acceptor. Positions 1041-1106 (RNINWDDIYH…RGFSYTADFA (66 aa)) constitute an AGC-kinase C-terminal domain. Residue T1082 is modified to Phosphothreonine. S1100 carries the post-translational modification Phosphoserine. Y1101 is subject to Phosphotyrosine.

The protein belongs to the protein kinase superfamily. AGC Ser/Thr protein kinase family. PKC subfamily. In terms of assembly, interacts with hsp90.

It catalyses the reaction L-seryl-[protein] + ATP = O-phospho-L-seryl-[protein] + ADP + H(+). The enzyme catalyses L-threonyl-[protein] + ATP = O-phospho-L-threonyl-[protein] + ADP + H(+). Its function is as follows. Protein kinase C; part of cell wall integrity (CWI) signaling pathway composed of pkcA, the bck1-mkk2-mpka MAPK cascade and the downstream rlmA transcription regulator. The CWI signaling pathway regulates cell wall integrity and pyomelanin formation. CWI also controls oxidative stress response, gliotoxin production, iron adaptation and asexual development. Finally, CWI is constitutively required for A.fumigatus to cope with the temperature increase found in the mammalian lung environment, during infection. Modulates the expression of fumiquinazoline cluster during conidiogenesis. The sequence is that of Protein kinase C from Aspergillus fumigatus (strain ATCC MYA-4609 / CBS 101355 / FGSC A1100 / Af293) (Neosartorya fumigata).